A 187-amino-acid chain; its full sequence is Elongation factor P (187 aa).

It belongs to the elongation factor P family.

The protein localises to the cytoplasm. Its pathway is protein biosynthesis; polypeptide chain elongation. In terms of biological role, involved in peptide bond synthesis. Stimulates efficient translation and peptide-bond synthesis on native or reconstituted 70S ribosomes in vitro. Probably functions indirectly by altering the affinity of the ribosome for aminoacyl-tRNA, thus increasing their reactivity as acceptors for peptidyl transferase. The chain is Elongation factor P (efp) from Mycobacterium bovis (strain ATCC BAA-935 / AF2122/97).